The following is a 216-amino-acid chain: Maintenance of carboxysome distribution protein A (216 aa).

Gly-16, Gly-17, Gly-19, Lys-20, Thr-21, Thr-22, and Gln-45 together coordinate ATP. Thr-21 serves as a coordination point for Mg(2+).

The protein belongs to the ParA family. McdA subfamily. In terms of assembly, self-associates, associates with McdB.

The protein localises to the cytoplasm. The protein resides in the nucleoid. The enzyme catalyses ATP + H2O = ADP + phosphate + H(+). In terms of biological role, mcdA and McdB together mediate carboxysome positioning on the nucleoid and prevent their aggregation in the cell. McdA is an ATPase that forms dynamic gradients on the nucleoid in response to adapter protein McdB, which associates with carboxysomes. The interplay between McdA gradients on the nucleoid and McdB-bound carboxysomes result in the equal spacing of Cbs along the cell length. Its function is as follows. Incorrect positioning (aggregation) of carboxysomes results in reduced CO(2) fixation by encapsulated form 1 ribulose-1,5-bisphosphate carboxylase (RuBisCO, cbbL/cbbS), which leads to slower growth. The polypeptide is Maintenance of carboxysome distribution protein A (Halothiobacillus neapolitanus (strain ATCC 23641 / c2) (Thiobacillus neapolitanus)).